A 506-amino-acid chain; its full sequence is Probable Xaa-Pro aminopeptidase BDCG_04966 (506 aa).

Mn(2+) contacts are provided by Asp-285, Asp-296, Glu-433, and Glu-471.

Belongs to the peptidase M24B family. Requires Mn(2+) as cofactor.

It carries out the reaction Release of any N-terminal amino acid, including proline, that is linked to proline, even from a dipeptide or tripeptide.. Catalyzes the removal of a penultimate prolyl residue from the N-termini of peptides. The chain is Probable Xaa-Pro aminopeptidase BDCG_04966 from Ajellomyces dermatitidis (strain ER-3 / ATCC MYA-2586) (Blastomyces dermatitidis).